Consider the following 113-residue polypeptide: U11-theraphotoxin-Hhn1o (113 aa).

Positions 1–21 (MNTVRVTFLLVFVLAVSLGQA) are cleaved as a signal peptide. Positions 22 to 74 (DKDENRMEMQEKTEQGKSYLDFAENLLLQKLEELEAKLLEEDSEESRNSRQKR) are excised as a propeptide. The disordered stretch occupies residues 61 to 83 (EEDSEESRNSRQKRCIGEGVPCD). 2 disulfides stabilise this stretch: Cys75-Cys90 and Cys82-Cys95.

It belongs to the neurotoxin 14 (magi-1) family. 01 (HNTX-16) subfamily. Expressed by the venom gland.

It is found in the secreted. In terms of biological role, probable ion channel inhibitor. The polypeptide is U11-theraphotoxin-Hhn1o (Cyriopagopus hainanus (Chinese bird spider)).